Here is a 437-residue protein sequence, read N- to C-terminus: 3-ketoacyl-CoA thiolase (437 aa).

The active-site Acyl-thioester intermediate is the Cys-99. Residues His-392 and Cys-422 each act as proton acceptor in the active site.

It belongs to the thiolase-like superfamily. Thiolase family. Heterotetramer of two alpha chains (FadJ) and two beta chains (FadI).

Its subcellular location is the cytoplasm. It catalyses the reaction an acyl-CoA + acetyl-CoA = a 3-oxoacyl-CoA + CoA. It participates in lipid metabolism; fatty acid beta-oxidation. In terms of biological role, catalyzes the final step of fatty acid oxidation in which acetyl-CoA is released and the CoA ester of a fatty acid two carbons shorter is formed. In Pectobacterium carotovorum subsp. carotovorum (strain PC1), this protein is 3-ketoacyl-CoA thiolase.